Reading from the N-terminus, the 571-residue chain is Proline--tRNA ligase (571 aa).

This sequence belongs to the class-II aminoacyl-tRNA synthetase family. ProS type 1 subfamily. As to quaternary structure, homodimer.

The protein localises to the cytoplasm. It catalyses the reaction tRNA(Pro) + L-proline + ATP = L-prolyl-tRNA(Pro) + AMP + diphosphate. Its function is as follows. Catalyzes the attachment of proline to tRNA(Pro) in a two-step reaction: proline is first activated by ATP to form Pro-AMP and then transferred to the acceptor end of tRNA(Pro). As ProRS can inadvertently accommodate and process non-cognate amino acids such as alanine and cysteine, to avoid such errors it has two additional distinct editing activities against alanine. One activity is designated as 'pretransfer' editing and involves the tRNA(Pro)-independent hydrolysis of activated Ala-AMP. The other activity is designated 'posttransfer' editing and involves deacylation of mischarged Ala-tRNA(Pro). The misacylated Cys-tRNA(Pro) is not edited by ProRS. The chain is Proline--tRNA ligase from Glaesserella parasuis serovar 5 (strain SH0165) (Haemophilus parasuis).